Reading from the N-terminus, the 126-residue chain is Holo-[acyl-carrier-protein] synthase (126 aa).

Positions 9 and 58 each coordinate Mg(2+).

This sequence belongs to the P-Pant transferase superfamily. AcpS family. Requires Mg(2+) as cofactor.

It localises to the cytoplasm. It carries out the reaction apo-[ACP] + CoA = holo-[ACP] + adenosine 3',5'-bisphosphate + H(+). Transfers the 4'-phosphopantetheine moiety from coenzyme A to a Ser of acyl-carrier-protein. The polypeptide is Holo-[acyl-carrier-protein] synthase (Photobacterium profundum (strain SS9)).